The following is a 160-amino-acid chain: Small ribosomal subunit protein uS17z (160 aa).

The protein belongs to the universal ribosomal protein uS17 family.

It is found in the cytoplasm. The protein is Small ribosomal subunit protein uS17z (RPS11A) of Arabidopsis thaliana (Mouse-ear cress).